Reading from the N-terminus, the 360-residue chain is DNA replication and repair protein RecF (360 aa).

30–37 (GQNGSGKT) is an ATP binding site.

This sequence belongs to the RecF family.

It localises to the cytoplasm. Functionally, the RecF protein is involved in DNA metabolism; it is required for DNA replication and normal SOS inducibility. RecF binds preferentially to single-stranded, linear DNA. It also seems to bind ATP. This chain is DNA replication and repair protein RecF, found in Shewanella frigidimarina (strain NCIMB 400).